Here is a 129-residue protein sequence, read N- to C-terminus: NADH-quinone oxidoreductase subunit 15 (129 aa).

It belongs to the complex I Nqo15 family. NDH-1 is composed of 15 different subunits, Nqo1 to Nqo15. The complex has a L-shaped structure, with the hydrophobic arm (subunits Nqo7, Nqo8 and Nqo10 to Nqo14) embedded in the membrane and the hydrophilic peripheral arm (subunits Nqo1 to Nqo6, Nqo9 and Nqo15) protruding into the bacterial cytoplasm. The hydrophilic domain contains all the redox centers. Nqo15 is bound to the side of the complex near the N-terminus of Nqo3, where it interacts with subunits Nqo3, Nqo2, Nqo1, Nqo9 and Nqo4.

The protein localises to the cell membrane. It carries out the reaction a quinone + NADH + 5 H(+)(in) = a quinol + NAD(+) + 4 H(+)(out). In terms of biological role, NDH-1 shuttles electrons from NADH, via FMN and iron-sulfur (Fe-S) centers, to quinones in the respiratory chain. The immediate electron acceptor for the enzyme in this species is menaquinone. Couples the redox reaction to proton translocation (for every two electrons transferred, four hydrogen ions are translocated across the cytoplasmic membrane), and thus conserves the redox energy in a proton gradient required for the synthesis of ATP. The Nqo15 subunit has probably a role in complex stabilization, and may be also involved in the storage of iron for iron-sulfur cluster regeneration in the complex. In Thermus thermophilus (strain ATCC 27634 / DSM 579 / HB8), this protein is NADH-quinone oxidoreductase subunit 15 (nqo15).